A 503-amino-acid polypeptide reads, in one-letter code: Ribose import ATP-binding protein RbsA (503 aa).

ABC transporter domains are found at residues 10-246 (LEVR…VGRD) and 256-500 (VEPG…TGSE). Residue 42–49 (GENGAGKS) coordinates ATP.

It belongs to the ABC transporter superfamily. Ribose importer (TC 3.A.1.2.1) family. As to quaternary structure, the complex is composed of an ATP-binding protein (RbsA), two transmembrane proteins (RbsC) and a solute-binding protein (RbsB).

It is found in the cell membrane. The enzyme catalyses D-ribose(out) + ATP + H2O = D-ribose(in) + ADP + phosphate + H(+). Its function is as follows. Part of the ABC transporter complex RbsABC involved in ribose import. Responsible for energy coupling to the transport system. This Rhodococcus jostii (strain RHA1) protein is Ribose import ATP-binding protein RbsA.